A 410-amino-acid polypeptide reads, in one-letter code: MRALTNLSQIATGEGRSFLSGERQADVKVYENHSILIHGGRIAEITRAVPPGVEEIDCGGGVAVPGFVDPHTHIAFAGNRVQEFYMRIRGTSYLDILRSGNGIYRTIRDTVNADENRIFKETISRVWSAVRRGTTTMEMKTGYGLDQRGEEKILSAIEVIKNTGPISVVPTYLAHVVPQDVQENAYVEGILETVKRNRQRISYADIFCDAGAFSPEASRRFLEAAIAMGIPARIHTNEIENVGCVKKTRGLPIVSYDHMIHFDDADLDIVKENGSSVTLLPITVFALNEAYPDARRIIDRGIPVSIATDISPLNMNDDMIFAMHLAVRNNHMNAEEVLNAATINPAASLGLAEKKGTIESGKDADLVVLSARSYDEIPYLYGLDIVSMTISRGNILYSRGDHGITDTSEA.

Residues H71 and H73 each contribute to the Fe(3+) site. 2 residues coordinate Zn(2+): H71 and H73. 3 residues coordinate 4-imidazolone-5-propanoate: R80, Y143, and H175. Y143 lines the N-formimidoyl-L-glutamate pocket. H235 contacts Fe(3+). Residue H235 coordinates Zn(2+). E238 is a binding site for 4-imidazolone-5-propanoate. D309 is a binding site for Fe(3+). Position 309 (D309) interacts with Zn(2+).

The protein belongs to the metallo-dependent hydrolases superfamily. HutI family. Zn(2+) serves as cofactor. It depends on Fe(3+) as a cofactor.

It localises to the cytoplasm. The catalysed reaction is 4-imidazolone-5-propanoate + H2O = N-formimidoyl-L-glutamate. Its pathway is amino-acid degradation; L-histidine degradation into L-glutamate; N-formimidoyl-L-glutamate from L-histidine: step 3/3. Catalyzes the hydrolytic cleavage of the carbon-nitrogen bond in imidazolone-5-propanoate to yield N-formimidoyl-L-glutamate. It is the third step in the universal histidine degradation pathway. The protein is Imidazolonepropionase of Thermoplasma acidophilum (strain ATCC 25905 / DSM 1728 / JCM 9062 / NBRC 15155 / AMRC-C165).